The primary structure comprises 103 residues: Truncated secreted TNF-receptor-like protein A53R (103 aa).

Residues 36-73 form a TNFR-Cys 1 repeat; sequence SCDKGEYLDKRHNQCCNRCPPGEFAKVRCNGNDNTKCE. Intrachain disulfides connect Cys-37/Cys-50, Cys-51/Cys-64, and Cys-54/Cys-72. One copy of the TNFR-Cys 2; truncated repeat lies at 74-103; that stretch reads RCPPHTYTTIPIILMDVINVENAQPDHLIR.

It belongs to the poxviridae A53R protein family.

The protein is Truncated secreted TNF-receptor-like protein A53R of Vaccinia virus (strain Western Reserve) (VACV).